Reading from the N-terminus, the 1400-residue chain is DNA-directed RNA polymerase subunit beta' (1400 aa).

Zn(2+) is bound by residues C71, C73, C86, and C89. Mg(2+)-binding residues include D462, D464, and D466. The Zn(2+) site is built by C810, C884, C891, and C894. The segment at 1377–1400 is disordered; sequence REKQATIVPPAAPEAEPLALPPVE.

It belongs to the RNA polymerase beta' chain family. As to quaternary structure, the RNAP catalytic core consists of 2 alpha, 1 beta, 1 beta' and 1 omega subunit. When a sigma factor is associated with the core the holoenzyme is formed, which can initiate transcription. Requires Mg(2+) as cofactor. The cofactor is Zn(2+).

The catalysed reaction is RNA(n) + a ribonucleoside 5'-triphosphate = RNA(n+1) + diphosphate. Its function is as follows. DNA-dependent RNA polymerase catalyzes the transcription of DNA into RNA using the four ribonucleoside triphosphates as substrates. The protein is DNA-directed RNA polymerase subunit beta' of Rhodopseudomonas palustris (strain HaA2).